Consider the following 301-residue polypeptide: Sulfate adenylyltransferase subunit 2 (301 aa).

The segment at 279–301 (RQGRLIDRDEAGSMEKKKREGYF) is disordered.

It belongs to the PAPS reductase family. CysD subfamily. In terms of assembly, sulfate-activating enzymes, NodP and NodQ, may be physically associated.

The catalysed reaction is sulfate + ATP + H(+) = adenosine 5'-phosphosulfate + diphosphate. Functionally, proposed to provide activated sulfate for transfer to nod factor. The protein is Sulfate adenylyltransferase subunit 2 (nodP) of Rhizobium sp. (strain N33).